Reading from the N-terminus, the 303-residue chain is uncharacterized protein (303 aa).

The N-terminal stretch at 1–24 is a signal peptide; the sequence is MNRIALVFLYSLFLFNLAIGRVES. An N-linked (GlcNAc...) asparagine glycan is attached at Asn-116. The interval 124 to 179 is disordered; sequence FTRQQQKKSHDDDDDDDDSDSDESKEEEEKKKRDRKHRRDKRQAITQGSQNNTDPN. The span at 135-149 shows a compositional bias: acidic residues; sequence DDDDDDDSDSDESKE. Basic residues predominate over residues 155–164; the sequence is KRDRKHRRDK. Over residues 167–178 the composition is skewed to polar residues; sequence AITQGSQNNTDP.

This is an uncharacterized protein from Caenorhabditis elegans.